Consider the following 284-residue polypeptide: Signal peptidase I (284 aa).

A helical transmembrane segment spans residues 4–22; sequence NFPLLLVIAVAVCGLLALL. At 23-58 the chain is on the cytoplasmic side; sequence DLVFFAPRRRSAIASYQGSVSQPDAVVIEKLNKEPL. Residues 59–77 form a helical membrane-spanning segment; it reads LVEYGKSFFPVLFIVLVLR. Topologically, residues 78-284 are periplasmic; the sequence is SFLVEPFQIP…PNFSRVGLIK (207 aa). Residues S90 and K145 contribute to the active site.

This sequence belongs to the peptidase S26 family.

The protein localises to the cell inner membrane. It catalyses the reaction Cleavage of hydrophobic, N-terminal signal or leader sequences from secreted and periplasmic proteins.. This chain is Signal peptidase I (lepB), found in Pseudomonas fluorescens.